The primary structure comprises 42 residues: Phospholipase A1 (42 aa).

Belongs to the AB hydrolase superfamily. Lipase family. In terms of processing, contains six disulfide bonds. In terms of tissue distribution, expressed by the venom gland.

It is found in the secreted. The catalysed reaction is a 1,2-diacyl-sn-glycero-3-phosphocholine + H2O = a 2-acyl-sn-glycero-3-phosphocholine + a fatty acid + H(+). Its function is as follows. Catalyzes the hydrolysis of phosphatidylcholine with phospholipase A1 activity. May act as an allergen and induce hemolytic activity. This chain is Phospholipase A1, found in Polistes gallicus (Paper wasp).